Consider the following 817-residue polypeptide: MGQGSGDDGVPPAPFSSAAAAAHSPPHSPLSVGVSSASSATSSSSTPPSSTSPAGVSASGARNVETDWKQSGDENLAELCIFHVPDKSVSLPNPKRAECTLPMNLILKSSSKNRKKSSIWSSDHIPRGVRFGPLVGEIRLVDVDTALVCPAEASMAGGGPAQEDVPFDEAPEEWKIYSPSGGRLNKTICVKDDARSNWMKYVAAAEEEDFQNLVAAQIGNDIYFYTVKKIEANTELSFWFSRDYARKLNYSTRPYVRVRRPATQLIPSAPPASASTAIASLAETIVAIDYSVKKLIESPIDTLSTDASSASDEEMIDVEEQESCTRPVAEVTRPNVIQNPVVRPVATKVNNFPGIPVRLGNFYASPLVDFKEFMRKSLQLKLVDTSMFVSPVAQTTAAITATGGRSGQPIDVQPVLAATAGAHFGNYAAIYGSQDFQHELSKPLYTSASPAFGGGGGMGGGFGMGGSAHTSSFHQLPFVNHSSSSHNDSSFNGVPNYVQQQENGKTRYACKDCNKTFGQLSNLKVHVRTHTGERPFKCEICTKEFTQLAHLQKHHLVHTGERPHRCDICDKRFSSTSNLKTHLRLHNGQKPYTCDVCDAKFTQYVHLRLHKRLHANERPYSCGTCGKKYISPSGLRTHWKTTTCKEEDMKDSMRDDLMDIKGEIDEGSMSGSGYGNLGIFENTLNSELKRPLMPIETIYSKYNLPNASLLGQGPSGMQEQQAPPPTSQQQQHMMYGNTMGHMGQGSHLQGPPPPPQHFQMDHSGMQNGGGIPHQHQLIQGGPSSGSGQQQHPQHNGIHRLPDLKNPLLPSLGLPHYP.

Residues 1–62 (MGQGSGDDGV…PAGVSASGAR (62 aa)) form a disordered region. Low complexity predominate over residues 15-61 (FSSAAAAAHSPPHSPLSVGVSSASSATSSSSTPPSSTSPAGVSASGA). The 139-residue stretch at 103–241 (MNLILKSSSK…ANTELSFWFS (139 aa)) folds into the SET domain. 4 C2H2-type zinc fingers span residues 508 to 530 (YACK…VRTH), 536 to 558 (FKCE…HLVH), 564 to 586 (HRCD…LRLH), and 592 to 614 (YTCD…KRLH). A C2H2-type 5; degenerate zinc finger spans residues 620–642 (YSCGTCGKKYISPSGLRTHWKTT). The interval 709-817 (LLGQGPSGMQ…LPSLGLPHYP (109 aa)) is disordered. Positions 779–794 (QGGPSSGSGQQQHPQH) are enriched in low complexity.

In terms of assembly, interacts with dre-1; the interaction targets blmp-1 for proteasomal degradation. Interacts with ldb-1 and ham-3. Ubiquitinated by the SCF(dre-1) complex, leading to its degradation by the proteasome. In terms of tissue distribution, expressed in hypodermal, vulval, intestinal and distal tip cells.

The protein resides in the nucleus. It localises to the cytoplasm. Its function is as follows. Transcription factor which binds to enhancer elements in the promoter region of genes. Regulates the expression of the transcription factor bed-3 to control vulval development. Promotes terminal differentiation in the hypodermis and is involved in regulation of gonadal outgrowth and entry into the dauer stage. Regulates the timing of dorsalward migration of the distal tip cells of the hermaphrodite gonad by inhibiting precocious unc-5 and lin-29 expression which in turn prevents early dorsalward turning. Plays a role in male tail tip morphogenesis. This is B lymphocyte-induced maturation protein 1 homolog from Caenorhabditis elegans.